Reading from the N-terminus, the 145-residue chain is Large ribosomal subunit protein uL13 (145 aa).

The interval 72–91 (DKMYHRHSNHPGGLKSISAG) is disordered.

This sequence belongs to the universal ribosomal protein uL13 family. In terms of assembly, part of the 50S ribosomal subunit.

Its function is as follows. This protein is one of the early assembly proteins of the 50S ribosomal subunit, although it is not seen to bind rRNA by itself. It is important during the early stages of 50S assembly. In Staphylococcus epidermidis (strain ATCC 12228 / FDA PCI 1200), this protein is Large ribosomal subunit protein uL13.